Consider the following 78-residue polypeptide: cAMP-dependent protein kinase inhibitor beta (78 aa).

Residues 1-10 (MRTDSSKMTD) are compositionally biased toward basic and acidic residues. Positions 1–78 (MRTDSSKMTD…QLEKPQNEEK (78 aa)) are disordered. Positions 33-42 (IQSSAATDGT) are enriched in polar residues. Basic and acidic residues predominate over residues 53-78 (SVKEDAKEKDEKTTQDQLEKPQNEEK).

This sequence belongs to the PKI family.

Extremely potent competitive inhibitor of cAMP-dependent protein kinase activity, this protein interacts with the catalytic subunit of the enzyme after the cAMP-induced dissociation of its regulatory chains. The chain is cAMP-dependent protein kinase inhibitor beta (PKIB) from Homo sapiens (Human).